Reading from the N-terminus, the 291-residue chain is MATLASSTKPQKWVSLIAGGVAGGVEAASTYPFEYAKTRVQLLRTSKSTPSNPLRLIFTVAQQEGVGALYTGCSTLIIGTTAKAAVRFVSYDTIKNSLSDERGSLSPARGIVAGVVAGATESVLAVTPTERIKTALIDDAKNARQFRSSLHATQVLVRTHGLRELYRGLVSTTLKQSATSAVRMGTYNILKESFKAHDIPPTLFTTFCMGALAGVVTVYATQPFDTIKTRAQGVQGAGLVEAIRNIQSDYGVRGFWKGSSMRLGRLLLSGGIVFSVYEKMTYLLHSRAGVE.

Solcar repeat units follow at residues 10–97, 105–193, and 201–283; these read PQKW…IKNS, LSPA…LKES, and PTLF…MTYL. Transmembrane regions (helical) follow at residues 16 to 36, 74 to 94, 112 to 132, 172 to 192, 203 to 220, and 255 to 276; these read LIAG…FEYA, STLI…YDTI, VAGV…TERI, TTLK…ILKE, LFTT…TVYA, and FWKG…VFSV.

Belongs to the mitochondrial carrier (TC 2.A.29) family.

The protein resides in the mitochondrion inner membrane. The catalysed reaction is citrate(in) + H(+)(in) = citrate(out) + H(+)(out). In terms of biological role, mitochondrial transporter that mediates citrate export from mitochondria to cytoplasm. Both ctpA, ctpB, and ctpD play important roles in citric acid transport across the mitochondrial membrane and function in a redundant manner. The sequence is that of Mitochondrial citrate transporter B from Aspergillus niger (strain ATCC 1015 / CBS 113.46 / FGSC A1144 / LSHB Ac4 / NCTC 3858a / NRRL 328 / USDA 3528.7).